Here is a 257-residue protein sequence, read N- to C-terminus: Tryptophan synthase alpha chain (257 aa).

Catalysis depends on proton acceptor residues E46 and D57.

It belongs to the TrpA family. As to quaternary structure, tetramer of two alpha and two beta chains.

The catalysed reaction is (1S,2R)-1-C-(indol-3-yl)glycerol 3-phosphate + L-serine = D-glyceraldehyde 3-phosphate + L-tryptophan + H2O. The protein operates within amino-acid biosynthesis; L-tryptophan biosynthesis; L-tryptophan from chorismate: step 5/5. Its function is as follows. The alpha subunit is responsible for the aldol cleavage of indoleglycerol phosphate to indole and glyceraldehyde 3-phosphate. This Parabacteroides distasonis (strain ATCC 8503 / DSM 20701 / CIP 104284 / JCM 5825 / NCTC 11152) protein is Tryptophan synthase alpha chain.